The sequence spans 422 residues: MRLSKYYLPTLKEKPAHAKIISHQYSLRAGLIKQIASGIYTWLPLGLLVLKNIEDIIRDEMNKSGAIEALMPCVQPASLWRESGRYDDYGKEMLRIKDRHEEDMLFGPTHEEIATDLIRDVVKSYKDLPLCLYQIQWKFRDEVRPRYGVMRGREFLMKDAYSFDVDYEGALNSYNLMYKTYIKIFKRMGFTPIGVGADTGPIGGNLSHEFHILANTGESTLYYDNKFSELLESEDIESLKSIYAVADDMHDPETCPISQEQLNVSKGIEIGHIFYFGDKYSKPMKASVTSQDGKNVNIHMGSYGIGVSRLVGAIIEAFHDDKGIIWPEEVAPFRIGLINLQTKVTEAADKIYKALKSDEVLYDDTEGSVGVKFSRMDLIGLPWQIIVGKKAVSENIVEVKNRATGEVKEMQIEEAINHFSAK.

The protein belongs to the class-II aminoacyl-tRNA synthetase family. ProS type 2 subfamily. In terms of assembly, homodimer.

It localises to the cytoplasm. It catalyses the reaction tRNA(Pro) + L-proline + ATP = L-prolyl-tRNA(Pro) + AMP + diphosphate. Catalyzes the attachment of proline to tRNA(Pro) in a two-step reaction: proline is first activated by ATP to form Pro-AMP and then transferred to the acceptor end of tRNA(Pro). The chain is Proline--tRNA ligase from Wolbachia pipientis wMel.